We begin with the raw amino-acid sequence, 304 residues long: Developmental pluripotency-associated protein 4 (304 aa).

Over residues methionine 1–methionine 11 the composition is skewed to polar residues. Disordered regions lie at residues methionine 1–leucine 84 and lysine 147–proline 176. A compositionally biased stretch (basic and acidic residues) spans glutamate 12–aspartate 29. Threonine 215 is modified (phosphothreonine). A phosphoserine mark is found at serine 221 and serine 226.

In terms of assembly, interacts with DPPA2. Interacts with PCGF1.

The protein localises to the nucleus. Its function is as follows. May be involved in the maintenance of active epigenetic status of target genes. May inhibit differentiation of embryonic cells into a primitive ectoderm lineage. The polypeptide is Developmental pluripotency-associated protein 4 (DPPA4) (Homo sapiens (Human)).